We begin with the raw amino-acid sequence, 515 residues long: Ribosome assembly protein 4 (515 aa).

The interaction with MDN1 stretch occupies residues arginine 20–lysine 128. The ubiquitin-like (UBL) domain stretch occupies residues leucine 29–alanine 125. WD repeat units follow at residues glycine 141–threonine 181, glycine 184–aspartate 223, glycine 227–threonine 273, glycine 276–asparagine 314, alanine 352–alanine 396, glycine 400–threonine 439, glycine 442–aspartate 481, and glycine 484–histidine 515.

Belongs to the NLE1/RSA4 family. Associates with the pre-60S ribosomal particle. Interacts (via WD repeats) with uL18 (RPL5). Interacts (via UBL domain) with MDN1 (via VWFA/MIDAS domain). Interacts (via WD repeats) with NSA2.

Its subcellular location is the nucleus. It localises to the nucleolus. Its function is as follows. Involved in ribosome biogenesis. Required for processing and efficient intra-nuclear transport of pre-60S ribosomal subunits. Interacts with the AAA-ATPase Midasin (MDN1/REA1), which is essential for the ATP-dependent dissociation of a group of nonribosomal factors from the pre-60S particle. In Saccharomyces cerevisiae (strain ATCC 204508 / S288c) (Baker's yeast), this protein is Ribosome assembly protein 4.